The chain runs to 579 residues: MEVNAGGVIAYISSSSSASSPASCHSEGSENSFQSSSSSVPSSPNSSNSDTNGNPKNGDLANIEGILKNDRIDCSMKTSKSSAPGMTKSHSGVTKFSGMVLLCKVCGDVASGFHYGVHACEGCKGFFRRSIQQNIQYKKCLKNENCSIMRMNRNRCQQCRFKKCLSVGMSRDAVRFGRIPKREKQRMLIEMQSAMKTMMNSQFSGHLQNDTLVEHHEQTALPAQEQLRPKPQLEQENIKSSSPPSSDFAKEEVIGMVTRAHKDTFMYNQEQQENSAESMQPQRGERIPKNMEQYNLNHDHCGNGLSSHFPCSESQQHLNGQFKGRNIMHYPNGHAICIANGHCMNFSNAYTQRVCDRVPIDGFSQNENKNSYLCNTGGRMHLVCPMSKSPYVDPHKSGHEIWEEFSMSFTPAVKEVVEFAKRIPGFRDLSQHDQVNLLKAGTFEVLMVRFASLFDAKERTVTFLSGKKYSVDDLHSMGAGDLLNSMFEFSEKLNALQLSDEEMSLFTAVVLVSADRSGIENVNSVEALQETLIRALRTLIMKNHPNEASIFTKLLLKLPDLRSLNNMHSEELLAFKVHP.

A required for phosphorylation by CSNK1E and cytoplasmic localization region spans residues 1-60 (MEVNAGGVIAYISSSSSASSPASCHSEGSENSFQSSSSSVPSSPNSSNSDTNGNPKNGDL). The modulating stretch occupies residues 1–99 (MEVNAGGVIA…HSGVTKFSGM (99 aa)). Positions 13-54 (SSSSSASSPASCHSEGSENSFQSSSSSVPSSPNSSNSDTNGN) are enriched in low complexity. The segment at 13–61 (SSSSSASSPASCHSEGSENSFQSSSSSVPSSPNSSNSDTNGNPKNGDLA) is disordered. S46 bears the Phosphoserine; by GSK3-beta mark. Residues 100-176 (VLLCKVCGDV…VGMSRDAVRF (77 aa)) constitute a DNA-binding region (nuclear receptor). NR C4-type zinc fingers lie at residues 103–123 (CKVCGDVASGFHYGVHACEGC) and 140–164 (CLKNENCSIMRMNRNRCQQCRFKKC). N6-acetyllysine; by KAT5 is present on residues K162 and K163. Residues 222-250 (PAQEQLRPKPQLEQENIKSSSPPSSDFAK) are disordered. Residues 227–237 (LRPKPQLEQEN) show a composition bias toward basic and acidic residues. 2 cysteine pairs are disulfide-bonded: C337–C343 and C374–C384. In terms of domain architecture, NR LBD spans 369–579 (KNSYLCNTGG…EELLAFKVHP (211 aa)). Heme contacts are provided by C384 and H568. The segment at 397–579 (SGHEIWEEFS…EELLAFKVHP (183 aa)) is interaction with ZNHIT1.

This sequence belongs to the nuclear hormone receptor family. NR1 subfamily. Binds DNA as a monomer or a homodimer. Interacts with NCOA5 coactivator, leading to a strong increase of transcription of target genes. Interacts (via N-terminus) with KAT5. Interacts (via C-terminus) with HDAC1. Interacts with ZNHIT1. Interacts with SIAH2. Post-translationally, deacetylated by HDAC1. Acetylation and deacetylation regulate its transcriptional regulatory activity. Under more reducing intracellular redox conditions, Cys-384 is in its heme-bound state, which is optimal for recruitment of the NCOR1/HDAC3 corepressor complex and repression of target genes. When subjected to oxidative stress conditions, Cys-384 undergoes oxidation to form a disulfide bridge with Cys-374, also triggering a ligand switch that results in release of bound heme and derepression of target genes. In terms of processing, ubiquitinated by SIAH2; leading to proteasomal degradation. Post-translationally, phosphorylated by CSNK1E; phosphorylation enhances its cytoplasmic localization. As to expression, widely expressed. Expressed at high levels in the liver, adipose tissue, skeletal muscle and brain. Expression oscillates diurnally in the suprachiasmatic nucleus (SCN) of the hypothalamus as well as in peripheral tissues.

Its subcellular location is the nucleus. It is found in the cytoplasm. Its activity is regulated as follows. The heme-bound form can bind gaseous signaling molecules such as CO and nitric oxide (NO) and NO can reverse its transcriptional repressor activity. Transcriptional repressor which coordinates circadian rhythm and metabolic pathways in a heme-dependent manner. Integral component of the complex transcription machinery that governs circadian rhythmicity and forms a critical negative limb of the circadian clock by directly repressing the expression of core clock components BMAL1 and CLOCK. Also regulates genes involved in metabolic functions, including lipid metabolism and the inflammatory response. Acts as a receptor for heme which stimulates its interaction with the NCOR1/HDAC3 corepressor complex, enhancing transcriptional repression. Recognizes two classes of DNA response elements within the promoter of its target genes and can bind to DNA as either monomers or homodimers, depending on the nature of the response element. Binds as a monomer to a response element composed of the consensus half-site motif 5'-[A/G]GGTCA-3' preceded by an A/T-rich 5' sequence (RevRE), or as a homodimer to a direct repeat of the core motif spaced by two nuclegotides (RevDR-2). Acts as a potent competitive repressor of ROR alpha (RORA) function and also negatively regulates the expression of NR1D1. Regulates lipid and energy homeostasis in the skeletal muscle via repression of genes involved in lipid metabolism and myogenesis including: CD36, FABP3, FABP4, UCP3, SCD1 and MSTN. Regulates hepatic lipid metabolism via the repression of APOC3. Represses gene expression at a distance in macrophages by inhibiting the transcription of enhancer-derived RNAs (eRNAs). In addition to its activity as a repressor, can also act as a transcriptional activator. Acts as a transcriptional activator of the sterol regulatory element-binding protein 1 (SREBF1) and the inflammatory mediator interleukin-6 (IL6) in the skeletal muscle. Plays a role in the regulation of circadian sleep/wake cycle; essential for maintaining wakefulness during the dark phase or active period. Key regulator of skeletal muscle mitochondrial function; negatively regulates the skeletal muscle expression of core clock genes and genes involved in mitochondrial biogenesis, fatty acid beta-oxidation and lipid metabolism. May play a role in the circadian control of neutrophilic inflammation in the lung. This chain is Nuclear receptor subfamily 1 group D member 2, found in Homo sapiens (Human).